Here is a 420-residue protein sequence, read N- to C-terminus: rRNA methyltransferase 3, mitochondrial (420 aa).

The N-terminal 40 residues, 1-40 (MAALVRPARFVVRPLLQVVQAWDLDARRWVRALRRSPVKV), are a transit peptide targeting the mitochondrion. Residues 49 to 88 (EQKRAPGKQPRKAPSEASAQEQREKQPLEESASRAPSTWE) form a disordered region. Residues 69–80 (EQREKQPLEESA) are compositionally biased toward basic and acidic residues. Residues G356, I380, and L389 each coordinate S-adenosyl-L-methionine.

It belongs to the class IV-like SAM-binding methyltransferase superfamily. RNA methyltransferase TrmH family. As to expression, expressed at same level in normal liver and hepatocarcinoma.

The protein resides in the mitochondrion. It catalyses the reaction guanosine(1370) in 16S rRNA + S-adenosyl-L-methionine = 2'-O-methylguanosine(1370) in 16S rRNA + S-adenosyl-L-homocysteine + H(+). S-adenosyl-L-methionine-dependent 2'-O-ribose methyltransferase that catalyzes the formation of 2'-O-methylguanosine at position 1370 (Gm1370) in the 16S mitochondrial large subunit ribosomal RNA (mtLSU rRNA), a conserved modification in the peptidyl transferase domain of the mtLSU rRNA. Also required for formation of 2'-O-methyluridine at position 1369 (Um1369) mediated by MRM2. This chain is rRNA methyltransferase 3, mitochondrial, found in Homo sapiens (Human).